The following is a 729-amino-acid chain: Rho GTPase-activating protein 28 (729 aa).

A disordered region spans residues methionine 1 to glutamate 78. Residues leucine 37 to asparagine 49 are compositionally biased toward basic residues. A compositionally biased stretch (low complexity) spans serine 63–serine 76. Residue serine 70 is modified to Phosphoserine. The residue at position 164 (threonine 164) is a Phosphothreonine. Residues phenylalanine 180–glutamate 234 are disordered. Residues serine 221–alanine 231 show a composition bias toward polar residues. Residues valine 384–tryptophan 581 form the Rho-GAP domain.

Functionally, GTPase activator for the Rho-type GTPases by converting them to an inactive GDP-bound state. The protein is Rho GTPase-activating protein 28 (Arhgap28) of Mus musculus (Mouse).